Reading from the N-terminus, the 223-residue chain is Alpha-S2-casein (223 aa).

The N-terminal stretch at 1–15 is a signal peptide; sequence MKFFIFTCLLAVALA. Serine 23, serine 24, serine 25, serine 72, serine 73, serine 74, serine 77, serine 145, serine 147, serine 151, and serine 159 each carry phosphoserine. A repeat spans 77–141; sequence SAEVAPEEVK…AGPFTPTVNR (65 aa). A repeat spans 159–223; the sequence is STEVFTKKTK…TNAIPYVRYL (65 aa).

This sequence belongs to the alpha-casein family. Mammary gland specific. Secreted in milk.

It is found in the secreted. In terms of biological role, important role in the capacity of milk to transport calcium phosphate. In Ovis aries (Sheep), this protein is Alpha-S2-casein (CSN1S2).